Here is a 189-residue protein sequence, read N- to C-terminus: GTP cyclohydrolase 1 (189 aa).

3 residues coordinate Zn(2+): Cys78, His81, and Cys150.

This sequence belongs to the GTP cyclohydrolase I family. As to quaternary structure, toroid-shaped homodecamer, composed of two pentamers of five dimers.

It catalyses the reaction GTP + H2O = 7,8-dihydroneopterin 3'-triphosphate + formate + H(+). The protein operates within cofactor biosynthesis; 7,8-dihydroneopterin triphosphate biosynthesis; 7,8-dihydroneopterin triphosphate from GTP: step 1/1. This is GTP cyclohydrolase 1 from Listeria innocua serovar 6a (strain ATCC BAA-680 / CLIP 11262).